The chain runs to 1692 residues: MDQSKRLLKSAVPNPPEHFKTGISWLDDLDEKDDDSATSVNYDIPEITEANLCNDSHEALSPCTQPVGNSGRPVEAFKTYPSTPAVPSKSVLFHFYEPDENFSLSDTGRTKSDTALAARESSEKSEVPRDTRSAGIKPYKENNSSNCAISKEAGLRRLIDKDRESFDKNLNQSFTNLTFPEPISDDSDSVEFQRDSLNNNWPASLEGSIHELPRNSDDDGIPASAAHILDLDYHRDSYDSPWKKFLPYPSILSDDSWKAPESWGTSLPTEAIPKQVFTTRFFARPSLGNRKKEFFLRVYRDDRTSVSFICPIGIQTHEVIKLLARLFFLPSSANFYLLLIQFNTERILLPHEQPCIIFERLLSLFGCKVTSDEEINEEDNYSVARLVFTTMDIGADVLRKFSEKKITANLDISRSNLEVIPVKIYPYAHELISLNVSHNLSLDLPLDFMERCVKLKRLDISNNLRSPRGKPITALRQLEVLNMSRNDIYELDPLIFSGLSRNSLKELNIANNKLFFLPHSTRYLVNLTYLDLSYNNFVTFPLIITELSQLETLNFSHNLLSQISSKIGSLVKLKHLYLQFNDLSNRLPQEIGLLKNLETIDLSYNAITNIASLSECPKLNSINVACNLLSFYEYSNPSATFIDFSFCPLTTIDPAFSYSNLVYFDISHAKLIGLKDSVIETLVNVETVKVNYNHFTSISDAISAMQNLKYLSCTNCEMSYVSPNLGKLKHLVHLDLHANNIKIFPEEVWQVSSLKVVNLSSNILEKIKLPVATSKKLTRTISQLKIMRTLSGNPVSSLSSQEFVMPTVEELYLVDNRLGNDCFTALEYFKCLKVLNLSYNYLTEIPSKFFQNFSDLKHLFVSGNELANLSISSTAQVLLETLYANGNRLSSFPKNEALSKSLRFLDISTNNLQNLAVEKAEKKSLTKLPQLEYLNLSGNTWFRFSEHEDTNFTKSYLKNLKFLSIMDLNTKFSNAPSDVLNHFIQRNSPQPNILRYGVCGYLSRSIPVISACELVVNNFLHPQSSLYCVLDSDISAGKNNRVLKFVYDNLASCLAHEINAADSSSEQICNALRRGFLRLNKKLGNVIHYDLRKSSEGDVDSNYVTTMNISEKGYSMDSSCLDIGVSIILVYVRDTRAFVANVGTSMAIMSTRNDSEPTTLSVMHDVYNRDEIRRIVDSCGFISGEIKSTTTRAIGRLSQFPGVQAVPYVNVQYLSELNEFIILANQEFWSVLSKRTVIDVVRANRHSPLLASTKLRDYAIAYGAEKNVLVVIVELNGLFEENSLNFNQLRGDEKTLAISEKNDNMSFVQDLPDDSSLARMNREVSPPKGCIAMVFTDIKNSTLLWERHPIAMRSAIKTHNTIMRRQLRATGGYEVKTEGDAFMVCFQTVPAALLWCFSVQLQLLSADWPNEIVESVQGRLVLGSKNEVLYRGLSVRIGVNYGVTVSELDPITRRMDYYGPVVNRTSRVVSVADGGQIAVSAEVVSVLNQLDSETMSSEKTNVNEMEVRALKQIGYIIHNLGEFKLKGLDTTEMISLVYPVQLQGRLERLIKSRSLGTPTALPETQTYTPVRSRSNSLRPMLARLSDSKSVHGEEGGSGKRSVSSLRNVSPSESTGGYEGCIFDDQQYQLLYELCERLEDHAAILHGFPEPPPCDTGLAAPVNQAEEYSLFYRLTLRIENTIYCVSQMLGHTG.

2 disordered regions span residues 1–22 (MDQS…FKTG) and 103–142 (SLSD…YKEN). The segment covering 120-132 (ESSEKSEVPRDTR) has biased composition (basic and acidic residues). The tract at residues 174–195 (FTNLTFPEPISDDSDSVEFQRD) is required for interaction with gpa2. The Ras-associating domain occupies 292–380 (KEFFLRVYRD…SDEEINEEDN (89 aa)). LRR repeat units lie at residues 430–450 (ELIS…DFME), 454–474 (KLKR…PITA), 477–498 (QLEV…IFSG), 503–524 (SLKE…TRYL), 526–547 (NLTY…ITEL), 549–570 (QLET…IGSL), 572–594 (KLKH…IGLL), 596–617 (NLET…SECP), 618–639 (KLNS…NPSA), 660–681 (NLVY…VIET), 684–705 (NVET…ISAM), 707–729 (NLKY…GKLK), 730–751 (HLVH…VWQV), 753–774 (SLKV…VATS), 783–805 (QLKI…EFVM), 807–827 (TVEE…TALE), 831–852 (CLKV…FFQN), 855–876 (DLKH…STAQ), 878–899 (LLET…EALS), 901–922 (SLRF…KAEK), and 930–951 (QLEY…EDTN). Residues 995-1275 (RYGVCGYLSR…KNVLVVIVEL (281 aa)) enclose the PPM-type phosphatase domain. The region spanning 1332 to 1469 (AMVFTDIKNS…PVVNRTSRVV (138 aa)) is the Guanylate cyclase domain. 2 residues coordinate Mg(2+): D1337 and D1380. Residues D1337 and D1380 each coordinate Mn(2+). The segment covering 1585–1597 (SDSKSVHGEEGGS) has biased composition (basic and acidic residues). Residues 1585–1614 (SDSKSVHGEEGGSGKRSVSSLRNVSPSEST) form a disordered region. Residues 1600-1614 (RSVSSLRNVSPSEST) are compositionally biased toward polar residues.

It belongs to the adenylyl cyclase class-3 family. In terms of assembly, interacts (via N-terminus) with gpa2; the interaction is direct and serves to activate adenylate cyclase and cAMP-PKA signaling, to repress sexual development and gluconeogenesis. Interacts with git1. It depends on Mn(2+) as a cofactor.

It is found in the cytoplasm. It carries out the reaction ATP = 3',5'-cyclic AMP + diphosphate. Activated by binding G protein gpa2. Activated by git1. In contrast to yeast cyclase, S.pombe cyclase is not likely to be regulated by RAS proteins. Its function is as follows. Acts in glucose-induced cAMP signaling by catalyzing the synthesis of the second messenger, cAMP to activate PKA signaling and repress sexual development and gluconeogenesis. The polypeptide is Adenylate cyclase (Schizosaccharomyces pombe (strain 972 / ATCC 24843) (Fission yeast)).